Consider the following 177-residue polypeptide: ATP synthase subunit delta (177 aa).

This sequence belongs to the ATPase delta chain family. As to quaternary structure, F-type ATPases have 2 components, F(1) - the catalytic core - and F(0) - the membrane proton channel. F(1) has five subunits: alpha(3), beta(3), gamma(1), delta(1), epsilon(1). F(0) has three main subunits: a(1), b(2) and c(10-14). The alpha and beta chains form an alternating ring which encloses part of the gamma chain. F(1) is attached to F(0) by a central stalk formed by the gamma and epsilon chains, while a peripheral stalk is formed by the delta and b chains.

It localises to the cell inner membrane. F(1)F(0) ATP synthase produces ATP from ADP in the presence of a proton or sodium gradient. F-type ATPases consist of two structural domains, F(1) containing the extramembraneous catalytic core and F(0) containing the membrane proton channel, linked together by a central stalk and a peripheral stalk. During catalysis, ATP synthesis in the catalytic domain of F(1) is coupled via a rotary mechanism of the central stalk subunits to proton translocation. Functionally, this protein is part of the stalk that links CF(0) to CF(1). It either transmits conformational changes from CF(0) to CF(1) or is implicated in proton conduction. The protein is ATP synthase subunit delta of Vibrio vulnificus (strain CMCP6).